We begin with the raw amino-acid sequence, 156 residues long: Small ribosomal subunit protein uS7 (156 aa).

This sequence belongs to the universal ribosomal protein uS7 family. As to quaternary structure, part of the 30S ribosomal subunit. Contacts proteins S9 and S11.

Functionally, one of the primary rRNA binding proteins, it binds directly to 16S rRNA where it nucleates assembly of the head domain of the 30S subunit. Is located at the subunit interface close to the decoding center, probably blocks exit of the E-site tRNA. The polypeptide is Small ribosomal subunit protein uS7 (Micrococcus luteus (strain ATCC 4698 / DSM 20030 / JCM 1464 / CCM 169 / CCUG 5858 / IAM 1056 / NBRC 3333 / NCIMB 9278 / NCTC 2665 / VKM Ac-2230) (Micrococcus lysodeikticus)).